Consider the following 180-residue polypeptide: Zinc finger protein 740 (180 aa).

Residues M1 to A11 are compositionally biased toward polar residues. Positions M1–S62 are disordered. A Glycyl lysine isopeptide (Lys-Gly) (interchain with G-Cter in SUMO2) cross-link involves residue K9. A Phosphoserine modification is found at S19. The segment covering C31–D56 has biased composition (basic and acidic residues). 2 consecutive C2H2-type zinc fingers follow at residues F88–H110 and F116–H138. The C2H2-type 3; atypical zinc finger occupies Y144–C166.

This sequence belongs to the krueppel C2H2-type zinc-finger protein family.

The protein localises to the nucleus. May be involved in transcriptional regulation. This Mus musculus (Mouse) protein is Zinc finger protein 740 (Znf740).